Here is a 49-residue protein sequence, read N- to C-terminus: SPbeta prophage-derived uncharacterized protein YoqT (49 aa).

Residues 7–29 form a helical membrane-spanning segment; sequence CFVNWSFDKIMDYILIAGLYFVF.

Its subcellular location is the cell membrane. This Bacillus subtilis (strain 168) protein is SPbeta prophage-derived uncharacterized protein YoqT (yoqT).